Reading from the N-terminus, the 616-residue chain is MNALIVKSALEYLELSTVVAILIIIACALLSYQISARRPLYYNLFVVEMHTWTTRRMVQVLHLGQEFTPPVTWERLVQRMRARAPRIQGEQRVAISDTNIVIQSPNTVIDSPAPARSPDVDLITLWDIEMPPPSAGHVPDATRDSQYAAAAAIAILARGDDASLMSRTYRPQLRPPTERSGNTRVDESRPSENSSRHDYVTTDVTYTTPSINPDMQHHLSTRTSNVTQTQPPTNQVFADTPELTEDIVIDQQEEDDEEDDDDDSSDDAIIEDHEEEEGQDDDEETEIEIDRGGPIEEIEQVEVEQNEDPPLDDQEVEAQPEQVLQETKESEFPVIEGPSEGKILIKLKFMNDTEKNTYASLEDTVAKFKVDHFTNLANQVIRLIYQGQLLREDHRTLEEYGLQPGSIVHCHISTTPYTRPGIATLPPIVNNGFRRRPRRSVRAPRDTTPMPSESVPVVDENVTTARRRAAQDRNVGQIYLLLSTMVPILSGIGLAFFRPDRIRDLLRPATLLTISQWVCNLLVDNGLLEQDDDDQETHLQTSTLFWIFGGQMVAVSIFLYYFPDVFDRVGFSIFIIVFLYFVFVVYSRQRRRQPDPVEVQNEMMENQIVQETIRLL.

2 disordered regions span residues 166–243 (SRTY…TPEL) and 272–298 (DHEE…IEEI). Positions 184–200 (RVDESRPSENSSRHDYV) are enriched in basic and acidic residues. Over residues 221-237 (TRTSNVTQTQPPTNQVF) the composition is skewed to polar residues. Residues 272–287 (DHEEEEGQDDDEETEI) show a composition bias toward acidic residues. Residues 343-417 (ILIKLKFMND…VHCHISTTPY (75 aa)) enclose the Ubiquitin-like domain.

This is an uncharacterized protein from Caenorhabditis elegans.